Here is a 127-residue protein sequence, read N- to C-terminus: Arginine decarboxylase proenzyme (127 aa).

Residue serine 72 is the Schiff-base intermediate with substrate; via pyruvic acid of the active site. Serine 72 is modified (pyruvic acid (Ser); by autocatalysis). Residue histidine 77 is the Proton acceptor; for processing activity of the active site. Cysteine 92 (proton donor; for catalytic activity) is an active-site residue.

It belongs to the prokaryotic AdoMetDC family. Type 1 subfamily. As to quaternary structure, heterooctamer of four alpha and four beta chains arranged as a tetramer of alpha/beta heterodimers. The cofactor is pyruvate. In terms of processing, is synthesized initially as an inactive proenzyme. Formation of the active enzyme involves a self-maturation process in which the active site pyruvoyl group is generated from an internal serine residue via an autocatalytic post-translational modification. Two non-identical subunits are generated from the proenzyme in this reaction, and the pyruvate is formed at the N-terminus of the alpha chain, which is derived from the carboxyl end of the proenzyme. The post-translation cleavage follows an unusual pathway, termed non-hydrolytic serinolysis, in which the side chain hydroxyl group of the serine supplies its oxygen atom to form the C-terminus of the beta chain, while the remainder of the serine residue undergoes an oxidative deamination to produce ammonia and the pyruvoyl group blocking the N-terminus of the alpha chain.

It catalyses the reaction L-arginine + H(+) = agmatine + CO2. It participates in amine and polyamine biosynthesis; agmatine biosynthesis; agmatine from L-arginine: step 1/1. In terms of biological role, specifically catalyzes the decarboxylation of L-arginine to agmatine. Has no S-adenosylmethionine decarboxylase (AdoMetDC) activity. This Staphylothermus marinus (strain ATCC 43588 / DSM 3639 / JCM 9404 / F1) protein is Arginine decarboxylase proenzyme.